The chain runs to 497 residues: 3-octaprenyl-4-hydroxybenzoate carboxy-lyase (497 aa).

A Mn(2+)-binding site is contributed by asparagine 175. Residues 178 to 180 (IYR), 192 to 194 (RWL), and 197 to 198 (RG) contribute to the prenylated FMN site. Glutamate 241 is a binding site for Mn(2+). Aspartate 290 acts as the Proton donor in catalysis.

Belongs to the UbiD family. As to quaternary structure, homohexamer. Requires prenylated FMN as cofactor. The cofactor is Mn(2+).

It localises to the cell membrane. It carries out the reaction a 4-hydroxy-3-(all-trans-polyprenyl)benzoate + H(+) = a 2-(all-trans-polyprenyl)phenol + CO2. Its pathway is cofactor biosynthesis; ubiquinone biosynthesis. Its function is as follows. Catalyzes the decarboxylation of 3-octaprenyl-4-hydroxy benzoate to 2-octaprenylphenol, an intermediate step in ubiquinone biosynthesis. The polypeptide is 3-octaprenyl-4-hydroxybenzoate carboxy-lyase (Shigella boydii serotype 4 (strain Sb227)).